A 298-amino-acid polypeptide reads, in one-letter code: Phosphatidylglycerol--prolipoprotein diacylglyceryl transferase (298 aa).

The next 7 membrane-spanning stretches (helical) occupy residues 17–37, 59–79, 97–117, 129–149, 204–224, 230–250, and 257–277; these read LAVRWYGLMYLVGFIAAIVVG, MMFYGVLGTVLGGRLGYVLFY, GGMSFHGGFLGVTLAMMLFAW, FVAPMVPLGLAAGRLGNFING, SQLYEIALEGIALFFVLFLFA, MGAISALFLIGYGLARFTVEF, and FLGLLALGLSMGQWLSLPMIL. A 1,2-diacyl-sn-glycero-3-phospho-(1'-sn-glycerol) is bound at residue arginine 142.

Belongs to the Lgt family.

The protein localises to the cell inner membrane. It catalyses the reaction L-cysteinyl-[prolipoprotein] + a 1,2-diacyl-sn-glycero-3-phospho-(1'-sn-glycerol) = an S-1,2-diacyl-sn-glyceryl-L-cysteinyl-[prolipoprotein] + sn-glycerol 1-phosphate + H(+). Its pathway is protein modification; lipoprotein biosynthesis (diacylglyceryl transfer). Its function is as follows. Catalyzes the transfer of the diacylglyceryl group from phosphatidylglycerol to the sulfhydryl group of the N-terminal cysteine of a prolipoprotein, the first step in the formation of mature lipoproteins. The sequence is that of Phosphatidylglycerol--prolipoprotein diacylglyceryl transferase from Burkholderia orbicola (strain MC0-3).